The chain runs to 431 residues: Serine/threonine-protein kinase Sgk1 (431 aa).

A necessary for localization to the mitochondria region spans residues 1-60 (MTVKTEAARDTLTYSRMRGMVAILIAFMKQRRMGLNDFIQKIANNSYACKHPEVQSILKI). Positions 64 to 92 (QEPELMNANPSPPPSPSQQINLGPSSNPH) are disordered. S74 bears the Phosphoserine mark. S78 carries the post-translational modification Phosphoserine; by MAPK7. The segment covering 81-91 (QQINLGPSSNP) has biased composition (polar residues). Residues 98–355 (FHFLKVIGKG…FMEIKNHVFF (258 aa)) form the Protein kinase domain. ATP-binding positions include 104 to 112 (IGKGSFGKV) and K127. The Nuclear localization signal signature appears at 131-141 (KKAILKKKEEK). Catalysis depends on D222, which acts as the Proton acceptor. T256 carries the post-translational modification Phosphothreonine; by PDPK1. The 76-residue stretch at 356–431 (SLINWEDLIN…SYAPPMDSFL (76 aa)) folds into the AGC-kinase C-terminal domain. A Phosphothreonine; by PKA modification is found at T369. S397, S401, and S422 each carry phosphoserine.

Belongs to the protein kinase superfamily. AGC Ser/Thr protein kinase family. Homodimer; disulfide-linked. Forms a trimeric complex with FBXW7 and NOTCH1. Interacts with MAPK3/ERK1, MAPK1/ERK2, MAP2K1/MEK1, MAP2K2/MEK2, NEDD4, NEDD4L, MAPT/TAU, MAPK7, CREB1, SLC9A3R2/NHERF2 and KCNJ1/ROMK1. Associates with the mammalian target of rapamycin complex 2 (mTORC2) via an interaction with MAPKAP1/SIN1. Regulated by phosphorylation. Activated by phosphorylation on Ser-422 by mTORC2, transforming it into a substrate for PDPK1 which phosphorylates it on Thr-256. Phosphorylation on Ser-397 and Ser-401 are also essential for its activity. Phosphorylation on Ser-78 by MAPK7 is required for growth factor-induced cell cycle progression. Post-translationally, ubiquitinated by NEDD4L; which promotes proteasomal degradation. Ubiquitinated by SYVN1 at the endoplasmic reticulum; which promotes rapid proteasomal degradation and maintains a high turnover rate in resting cells.

The protein localises to the cytoplasm. The protein resides in the nucleus. It is found in the endoplasmic reticulum membrane. Its subcellular location is the cell membrane. It localises to the mitochondrion. The catalysed reaction is L-seryl-[protein] + ATP = O-phospho-L-seryl-[protein] + ADP + H(+). It carries out the reaction L-threonyl-[protein] + ATP = O-phospho-L-threonyl-[protein] + ADP + H(+). Its activity is regulated as follows. Two specific sites, one in the kinase domain (Thr-256) and the other in the C-terminal regulatory region (Ser-422), need to be phosphorylated for its full activation. Phosphorylation at Ser-397 and Ser-401 are also essential for its activity. Activated by WNK1, WNK2, WNK3 and WNK4; which promote phosphorylation by mTORC2. Its function is as follows. Serine/threonine-protein kinase which is involved in the regulation of a wide variety of ion channels, membrane transporters, cellular enzymes, transcription factors, neuronal excitability, cell growth, proliferation, survival, migration and apoptosis. Plays an important role in cellular stress response. Contributes to regulation of renal Na(+) retention, renal K(+) elimination, salt appetite, gastric acid secretion, intestinal Na(+)/H(+) exchange and nutrient transport, insulin-dependent salt sensitivity of blood pressure, salt sensitivity of peripheral glucose uptake, cardiac repolarization and memory consolidation. Up-regulates Na(+) channels: SCNN1A/ENAC, SCN5A and ASIC1/ACCN2, K(+) channels: KCNJ1/ROMK1, KCNA1-5, KCNQ1-5 and KCNE1, epithelial Ca(2+) channels: TRPV5 and TRPV6, chloride channels: BSND, CLCN2 and CFTR, glutamate transporters: SLC1A3/EAAT1, SLC1A2 /EAAT2, SLC1A1/EAAT3, SLC1A6/EAAT4 and SLC1A7/EAAT5, amino acid transporters: SLC1A5/ASCT2, SLC38A1/SN1 and SLC6A19, creatine transporter: SLC6A8, Na(+)/dicarboxylate cotransporter: SLC13A2/NADC1, Na(+)-dependent phosphate cotransporter: SLC34A2/NAPI-2B, glutamate receptor: GRIK2/GLUR6. Up-regulates carriers: SLC9A3/NHE3, SLC12A1/NKCC2, SLC12A3/NCC, SLC5A3/SMIT, SLC2A1/GLUT1, SLC5A1/SGLT1 and SLC15A2/PEPT2. Regulates enzymes: GSK3A/B, PMM2 and Na(+)/K(+) ATPase, and transcription factors: CTNNB1 and nuclear factor NF-kappa-B. Stimulates sodium transport into epithelial cells by enhancing the stability and expression of SCNN1A/ENAC. This is achieved by phosphorylating the NEDD4L ubiquitin E3 ligase, promoting its interaction with 14-3-3 proteins, thereby preventing it from binding to SCNN1A/ENAC and targeting it for degradation. Regulates store-operated Ca(+2) entry (SOCE) by stimulating ORAI1 and STIM1. Regulates KCNJ1/ROMK1 directly via its phosphorylation or indirectly via increased interaction with SLC9A3R2/NHERF2. Phosphorylates MDM2 and activates MDM2-dependent ubiquitination of p53/TP53. Phosphorylates MAPT/TAU and mediates microtubule depolymerization and neurite formation in hippocampal neurons. Phosphorylates SLC2A4/GLUT4 and up-regulates its activity. Phosphorylates APBB1/FE65 and promotes its localization to the nucleus. Phosphorylates MAPK1/ERK2 and activates it by enhancing its interaction with MAP2K1/MEK1 and MAP2K2/MEK2. Phosphorylates FBXW7 and plays an inhibitory role in the NOTCH1 signaling. Phosphorylates FOXO1 resulting in its relocalization from the nucleus to the cytoplasm. Phosphorylates FOXO3, promoting its exit from the nucleus and interference with FOXO3-dependent transcription. Phosphorylates BRAF and MAP3K3/MEKK3 and inhibits their activity. Phosphorylates SLC9A3/NHE3 in response to dexamethasone, resulting in its activation and increased localization at the cell membrane. Phosphorylates CREB1. Necessary for vascular remodeling during angiogenesis. In Bos taurus (Bovine), this protein is Serine/threonine-protein kinase Sgk1 (SGK1).